A 260-amino-acid polypeptide reads, in one-letter code: Chloride intracellular channel Clic (260 aa).

The helical transmembrane segment at 42–66 threads the bilayer; it reads FCQEYFMDLYLLAELKTISLKVTTV.

This sequence belongs to the chloride channel CLIC family. Expressed in cardiac tubes.

Its subcellular location is the mitochondrion. It is found in the membrane. In terms of biological role, might insert into membranes and form chloride ion channels. Channel activity depends on the pH. May play a role in ethanol sensitivity. This Drosophila melanogaster (Fruit fly) protein is Chloride intracellular channel Clic.